The chain runs to 434 residues: Nicotinate phosphoribosyltransferase (434 aa).

A Phosphohistidine; by autocatalysis modification is found at H242.

The protein belongs to the NAPRTase family. Transiently phosphorylated on a His residue during the reaction cycle. Phosphorylation strongly increases the affinity for substrates and increases the rate of nicotinate D-ribonucleotide production. Dephosphorylation regenerates the low-affinity form of the enzyme, leading to product release.

It catalyses the reaction nicotinate + 5-phospho-alpha-D-ribose 1-diphosphate + ATP + H2O = nicotinate beta-D-ribonucleotide + ADP + phosphate + diphosphate. It participates in cofactor biosynthesis; NAD(+) biosynthesis; nicotinate D-ribonucleotide from nicotinate: step 1/1. In terms of biological role, catalyzes the synthesis of beta-nicotinate D-ribonucleotide from nicotinate and 5-phospho-D-ribose 1-phosphate at the expense of ATP. The polypeptide is Nicotinate phosphoribosyltransferase (Rhizobium etli (strain CIAT 652)).